A 943-amino-acid polypeptide reads, in one-letter code: Valine--tRNA ligase (943 aa).

The 'HIGH' region motif lies at Pro45–His55. The 'KMSKS' region motif lies at Lys541–Ser545. ATP is bound at residue Lys544. The stretch at Ile875–Lys934 forms a coiled coil.

Belongs to the class-I aminoacyl-tRNA synthetase family. ValS type 1 subfamily. Monomer.

The protein localises to the cytoplasm. The enzyme catalyses tRNA(Val) + L-valine + ATP = L-valyl-tRNA(Val) + AMP + diphosphate. In terms of biological role, catalyzes the attachment of valine to tRNA(Val). As ValRS can inadvertently accommodate and process structurally similar amino acids such as threonine, to avoid such errors, it has a 'posttransfer' editing activity that hydrolyzes mischarged Thr-tRNA(Val) in a tRNA-dependent manner. This chain is Valine--tRNA ligase, found in Dechloromonas aromatica (strain RCB).